The following is a 92-amino-acid chain: Small ribosomal subunit protein bS20 (92 aa).

The protein belongs to the bacterial ribosomal protein bS20 family.

Binds directly to 16S ribosomal RNA. This chain is Small ribosomal subunit protein bS20, found in Rickettsia africae (strain ESF-5).